The primary structure comprises 249 residues: 1-(5-phosphoribosyl)-5-[(5-phosphoribosylamino)methylideneamino] imidazole-4-carboxamide isomerase (249 aa).

Asp-8 (proton acceptor) is an active-site residue. Residue Asp-130 is the Proton donor of the active site.

Belongs to the HisA/HisF family.

The protein resides in the cytoplasm. It catalyses the reaction 1-(5-phospho-beta-D-ribosyl)-5-[(5-phospho-beta-D-ribosylamino)methylideneamino]imidazole-4-carboxamide = 5-[(5-phospho-1-deoxy-D-ribulos-1-ylimino)methylamino]-1-(5-phospho-beta-D-ribosyl)imidazole-4-carboxamide. It functions in the pathway amino-acid biosynthesis; L-histidine biosynthesis; L-histidine from 5-phospho-alpha-D-ribose 1-diphosphate: step 4/9. In Chromohalobacter salexigens (strain ATCC BAA-138 / DSM 3043 / CIP 106854 / NCIMB 13768 / 1H11), this protein is 1-(5-phosphoribosyl)-5-[(5-phosphoribosylamino)methylideneamino] imidazole-4-carboxamide isomerase.